Reading from the N-terminus, the 187-residue chain is Insulin-like growth factor 2 (187 aa).

Residues 1 to 23 (MCAARQILLLLLAFLAYALDSAA) form the signal peptide. The b stretch occupies residues 25–51 (YGTAETLCGGELVDTLQFVCGDRGFYF). 3 disulfides stabilise this stretch: C32-C71, C44-C84, and C70-C75. Residues 52 to 64 (SRPVGRNNRRINR) are c. Positions 64 to 85 (RGIVEECCFRSCDLALLETYCA) are a. The d stretch occupies residues 86 to 91 (KSVKSE). The propeptide at 92–187 (RDLSATSLAG…ASPEATGPQE (96 aa)) is e peptide. Residues 162–187 (HRPLISLPSQRPPAPRASPEATGPQE) form a disordered region.

The protein belongs to the insulin family.

The protein resides in the secreted. Functionally, the insulin-like growth factors, isolated from plasma, are structurally and functionally related to insulin but have a much higher growth-promoting activity. Acts as a ligand for integrin which is required for IGF2 signaling. The chain is Insulin-like growth factor 2 from Gallus gallus (Chicken).